Reading from the N-terminus, the 278-residue chain is tRNA pseudouridine synthase A (278 aa).

Aspartate 52 serves as the catalytic Nucleophile. Tyrosine 110 provides a ligand contact to substrate. A disordered region spans residues 259 to 278; it reads SKRQNGTTKVEQPSSYVHEE. The segment covering 261-278 has biased composition (polar residues); the sequence is RQNGTTKVEQPSSYVHEE.

It belongs to the tRNA pseudouridine synthase TruA family. As to quaternary structure, homodimer.

It catalyses the reaction uridine(38/39/40) in tRNA = pseudouridine(38/39/40) in tRNA. Formation of pseudouridine at positions 38, 39 and 40 in the anticodon stem and loop of transfer RNAs. The chain is tRNA pseudouridine synthase A from Chloroflexus aurantiacus (strain ATCC 29366 / DSM 635 / J-10-fl).